A 97-amino-acid polypeptide reads, in one-letter code: Exodeoxyribonuclease 7 small subunit (97 aa).

Residues 64-97 (NGQLHPAEEKGDDVSNNGVQNQGYKSQFLDGDVF) form a disordered region. The segment covering 77–88 (VSNNGVQNQGYK) has biased composition (polar residues).

Belongs to the XseB family. In terms of assembly, heterooligomer composed of large and small subunits.

It is found in the cytoplasm. It catalyses the reaction Exonucleolytic cleavage in either 5'- to 3'- or 3'- to 5'-direction to yield nucleoside 5'-phosphates.. In terms of biological role, bidirectionally degrades single-stranded DNA into large acid-insoluble oligonucleotides, which are then degraded further into small acid-soluble oligonucleotides. In Limosilactobacillus fermentum (strain NBRC 3956 / LMG 18251) (Lactobacillus fermentum), this protein is Exodeoxyribonuclease 7 small subunit.